We begin with the raw amino-acid sequence, 839 residues long: Probable E3 ubiquitin-protein ligase HUL4 (839 aa).

One can recognise an HECT domain in the interval 497–839 (QQKDLKKSLR…LEESQGYGFR (343 aa)). Cys807 acts as the Glycyl thioester intermediate in catalysis.

It belongs to the HUL4 family. Component of the TRAMP complex.

It localises to the nucleus. It catalyses the reaction S-ubiquitinyl-[E2 ubiquitin-conjugating enzyme]-L-cysteine + [acceptor protein]-L-lysine = [E2 ubiquitin-conjugating enzyme]-L-cysteine + N(6)-ubiquitinyl-[acceptor protein]-L-lysine.. In terms of biological role, probable E3 ubiquitin-protein ligase, component of the TRAMP complex which has a poly(A) RNA polymerase activity and is involved in a post-transcriptional quality control mechanism limiting inappropriate expression of genetic information. Polyadenylation is required for the degradative activity of the exosome on several of its nuclear RNA substrates. This Eremothecium gossypii (strain ATCC 10895 / CBS 109.51 / FGSC 9923 / NRRL Y-1056) (Yeast) protein is Probable E3 ubiquitin-protein ligase HUL4 (HUL4).